The sequence spans 240 residues: Phosphoribosyl isomerase A (240 aa).

Asp-11 serves as the catalytic Proton acceptor. The Proton donor role is filled by Asp-130.

This sequence belongs to the HisA/HisF family. As to quaternary structure, monomer.

It localises to the cytoplasm. It catalyses the reaction 1-(5-phospho-beta-D-ribosyl)-5-[(5-phospho-beta-D-ribosylamino)methylideneamino]imidazole-4-carboxamide = 5-[(5-phospho-1-deoxy-D-ribulos-1-ylimino)methylamino]-1-(5-phospho-beta-D-ribosyl)imidazole-4-carboxamide. The catalysed reaction is N-(5-phospho-beta-D-ribosyl)anthranilate = 1-(2-carboxyphenylamino)-1-deoxy-D-ribulose 5-phosphate. Its pathway is amino-acid biosynthesis; L-histidine biosynthesis; L-histidine from 5-phospho-alpha-D-ribose 1-diphosphate: step 4/9. It functions in the pathway amino-acid biosynthesis; L-tryptophan biosynthesis; L-tryptophan from chorismate: step 3/5. Functionally, catalyzes the isomerization of the aminoaldose moiety of ProFAR to the aminoketose of PRFAR in the biosynthesis pathway for histidine and the isomerization of the aminoaldose PRA to the aminoketose CdRP in the biosynthsis pathway for tryptophan. The polypeptide is Phosphoribosyl isomerase A (priA) (Streptomyces coelicolor (strain ATCC BAA-471 / A3(2) / M145)).